Consider the following 381-residue polypeptide: Chorismate synthase (381 aa).

Residues Arg41 and Arg47 each coordinate NADP(+). Residues 127–129 (RAS), 247–248 (QA), Gly291, 306–310 (KPIPT), and Arg332 each bind FMN.

It belongs to the chorismate synthase family. In terms of assembly, homotetramer. The cofactor is FMNH2.

It carries out the reaction 5-O-(1-carboxyvinyl)-3-phosphoshikimate = chorismate + phosphate. It participates in metabolic intermediate biosynthesis; chorismate biosynthesis; chorismate from D-erythrose 4-phosphate and phosphoenolpyruvate: step 7/7. Functionally, catalyzes the anti-1,4-elimination of the C-3 phosphate and the C-6 proR hydrogen from 5-enolpyruvylshikimate-3-phosphate (EPSP) to yield chorismate, which is the branch point compound that serves as the starting substrate for the three terminal pathways of aromatic amino acid biosynthesis. This reaction introduces a second double bond into the aromatic ring system. The sequence is that of Chorismate synthase from Anaeromyxobacter sp. (strain K).